We begin with the raw amino-acid sequence, 678 residues long: UvrABC system protein B (678 aa).

In terms of domain architecture, Helicase ATP-binding spans Glu31–Val417. Gly44–Thr51 contributes to the ATP binding site. The short motif at Tyr97–Ile120 is the Beta-hairpin element. The 167-residue stretch at Gln436 to Leu602 folds into the Helicase C-terminal domain. Residues Asp603 to Ala625 are disordered. Residues Gln638–Gln673 form the UVR domain.

The protein belongs to the UvrB family. Forms a heterotetramer with UvrA during the search for lesions. Interacts with UvrC in an incision complex.

The protein resides in the cytoplasm. The UvrABC repair system catalyzes the recognition and processing of DNA lesions. A damage recognition complex composed of 2 UvrA and 2 UvrB subunits scans DNA for abnormalities. Upon binding of the UvrA(2)B(2) complex to a putative damaged site, the DNA wraps around one UvrB monomer. DNA wrap is dependent on ATP binding by UvrB and probably causes local melting of the DNA helix, facilitating insertion of UvrB beta-hairpin between the DNA strands. Then UvrB probes one DNA strand for the presence of a lesion. If a lesion is found the UvrA subunits dissociate and the UvrB-DNA preincision complex is formed. This complex is subsequently bound by UvrC and the second UvrB is released. If no lesion is found, the DNA wraps around the other UvrB subunit that will check the other stand for damage. In Mannheimia succiniciproducens (strain KCTC 0769BP / MBEL55E), this protein is UvrABC system protein B.